A 363-amino-acid chain; its full sequence is Large ribosomal subunit protein uL4 (363 aa).

Belongs to the universal ribosomal protein uL4 family. Component of the large ribosomal subunit. Mature ribosomes consist of a small (40S) and a large (60S) subunit. The 40S subunit contains about 32 different proteins and 1 molecule of RNA (18S). The 60S subunit contains 45 different proteins and 3 molecules of RNA (25S, 5.8S and 5S).

The protein resides in the cytoplasm. In terms of biological role, component of the ribosome, a large ribonucleoprotein complex responsible for the synthesis of proteins in the cell. The small ribosomal subunit (SSU) binds messenger RNAs (mRNAs) and translates the encoded message by selecting cognate aminoacyl-transfer RNA (tRNA) molecules. The large subunit (LSU) contains the ribosomal catalytic site termed the peptidyl transferase center (PTC), which catalyzes the formation of peptide bonds, thereby polymerizing the amino acids delivered by tRNAs into a polypeptide chain. The nascent polypeptides leave the ribosome through a tunnel in the LSU and interact with protein factors that function in enzymatic processing, targeting, and the membrane insertion of nascent chains at the exit of the ribosomal tunnel. This Candida albicans (strain SC5314 / ATCC MYA-2876) (Yeast) protein is Large ribosomal subunit protein uL4.